A 260-amino-acid chain; its full sequence is Indole-3-glycerol phosphate synthase (260 aa).

Belongs to the TrpC family.

It catalyses the reaction 1-(2-carboxyphenylamino)-1-deoxy-D-ribulose 5-phosphate + H(+) = (1S,2R)-1-C-(indol-3-yl)glycerol 3-phosphate + CO2 + H2O. It participates in amino-acid biosynthesis; L-tryptophan biosynthesis; L-tryptophan from chorismate: step 4/5. In Neisseria meningitidis serogroup B (strain ATCC BAA-335 / MC58), this protein is Indole-3-glycerol phosphate synthase.